The chain runs to 377 residues: Gap junction gamma-1 protein (377 aa).

Over 1 to 18 the chain is Cytoplasmic; it reads MSWSFLTRLLEEINNHST. A helical transmembrane segment spans residues 19–39; the sequence is FVGKVWLTVLIIFRIVLTAVG. Residues 40–75 are Extracellular-facing; it reads GESIYYDEQSKFTCNTQQPGCENVCYDAFAPLSHVR. Residues 76-96 traverse the membrane as a helical segment; sequence FWVFQIILITTPSIMYLGFAM. Residues 97–174 lie on the Cytoplasmic side of the membrane; the sequence is HRIARQPEMQ…RRIKQDGLMK (78 aa). Residues 129–163 are disordered; it reads DYEEAEDNQEEDPMICEEEEPEKDSEKGDKKKHDG. Over residues 131–151 the composition is skewed to acidic residues; that stretch reads EEAEDNQEEDPMICEEEEPEK. A helical transmembrane segment spans residues 175–197; it reads VYVLQLLFRSVFEVGFLMGQYIL. The Extracellular segment spans residues 198 to 228; that stretch reads YGFEVIPFFVCSRKPCPHTVDCFVSRPTEKT. Residues 229-249 form a helical membrane-spanning segment; it reads IFLLIMYAVSALCLFLNLCEL. The Cytoplasmic segment spans residues 250–377; it reads FHLGIGGIRD…GVGNREKSGL (128 aa). 2 disordered regions span residues 265–294 and 334–377; these read KKEL…LPNG and LNPT…KSGL. Residues 337–362 show a composition bias toward polar residues; it reads TGDNTHASRSSSPESNSIAAEQNRLN.

It belongs to the connexin family. Gamma-type subfamily. A connexon is composed of a hexamer of connexins.

Its subcellular location is the cell membrane. The protein localises to the cell junction. It localises to the gap junction. Functionally, one gap junction consists of a cluster of closely packed pairs of transmembrane channels, the connexons, through which materials of low MW diffuse from one cell to a neighboring cell. The chain is Gap junction gamma-1 protein (gjc1) from Xenopus tropicalis (Western clawed frog).